A 495-amino-acid polypeptide reads, in one-letter code: Probable plastidic glucose transporter 3 (495 aa).

Transmembrane regions (helical) follow at residues 55 to 75, 97 to 117, 131 to 151, 154 to 174, 183 to 203, 214 to 234, 294 to 314, 330 to 350, 357 to 377, 384 to 404, 425 to 445, and 451 to 471; these read LPHV…LGVV, LVVS…GLVA, LPMI…GMLL, FLVG…VTEV, YGSS…FAGI, ICFW…ELCV, VVFI…NAVF, SANI…VVLM, VLLI…AIAY, FGTL…FATG, ALAV…LLFL, and LGSV…VIFV.

This sequence belongs to the major facilitator superfamily. Sugar transporter (TC 2.A.1.1) family.

Its subcellular location is the plastid. It localises to the chloroplast membrane. In terms of biological role, may be involved in the efflux of glucose towards the cytosol. This is Probable plastidic glucose transporter 3 from Arabidopsis thaliana (Mouse-ear cress).